The chain runs to 306 residues: Methionyl-tRNA formyltransferase (306 aa).

Residue 110-113 coordinates (6S)-5,6,7,8-tetrahydrofolate; sequence SLLP.

This sequence belongs to the Fmt family.

The enzyme catalyses L-methionyl-tRNA(fMet) + (6R)-10-formyltetrahydrofolate = N-formyl-L-methionyl-tRNA(fMet) + (6S)-5,6,7,8-tetrahydrofolate + H(+). Functionally, attaches a formyl group to the free amino group of methionyl-tRNA(fMet). The formyl group appears to play a dual role in the initiator identity of N-formylmethionyl-tRNA by promoting its recognition by IF2 and preventing the misappropriation of this tRNA by the elongation apparatus. This is Methionyl-tRNA formyltransferase from Brucella anthropi (strain ATCC 49188 / DSM 6882 / CCUG 24695 / JCM 21032 / LMG 3331 / NBRC 15819 / NCTC 12168 / Alc 37) (Ochrobactrum anthropi).